A 456-amino-acid polypeptide reads, in one-letter code: Chromosomal replication initiator protein DnaA (456 aa).

Residues methionine 1 to histidine 83 are domain I, interacts with DnaA modulators. Residues histidine 83 to serine 119 are domain II. The disordered stretch occupies residues alanine 92–asparagine 122. A compositionally biased stretch (basic and acidic residues) spans tryptophan 105–histidine 117. The segment at asparagine 120–alanine 336 is domain III, AAA+ region. ATP-binding residues include glycine 164, glycine 166, lysine 167, and threonine 168. The domain IV, binds dsDNA stretch occupies residues asparagine 337–serine 456.

Belongs to the DnaA family. In terms of assembly, oligomerizes as a right-handed, spiral filament on DNA at oriC.

It localises to the cytoplasm. Its function is as follows. Plays an essential role in the initiation and regulation of chromosomal replication. ATP-DnaA binds to the origin of replication (oriC) to initiate formation of the DNA replication initiation complex once per cell cycle. Binds the DnaA box (a 9 base pair repeat at the origin) and separates the double-stranded (ds)DNA. Forms a right-handed helical filament on oriC DNA; dsDNA binds to the exterior of the filament while single-stranded (ss)DNA is stabiized in the filament's interior. The ATP-DnaA-oriC complex binds and stabilizes one strand of the AT-rich DNA unwinding element (DUE), permitting loading of DNA polymerase. After initiation quickly degrades to an ADP-DnaA complex that is not apt for DNA replication. Binds acidic phospholipids. The protein is Chromosomal replication initiator protein DnaA of Aeromonas hydrophila subsp. hydrophila (strain ATCC 7966 / DSM 30187 / BCRC 13018 / CCUG 14551 / JCM 1027 / KCTC 2358 / NCIMB 9240 / NCTC 8049).